The chain runs to 546 residues: Chaperonin GroEL (546 aa).

ATP-binding positions include 30 to 33, Lys51, 87 to 91, Gly415, 479 to 481, and Asp495; these read TLGP, DGTTT, and NAA.

It belongs to the chaperonin (HSP60) family. In terms of assembly, forms a cylinder of 14 subunits composed of two heptameric rings stacked back-to-back. Interacts with the co-chaperonin GroES.

The protein localises to the cytoplasm. The catalysed reaction is ATP + H2O + a folded polypeptide = ADP + phosphate + an unfolded polypeptide.. Together with its co-chaperonin GroES, plays an essential role in assisting protein folding. The GroEL-GroES system forms a nano-cage that allows encapsulation of the non-native substrate proteins and provides a physical environment optimized to promote and accelerate protein folding. This is Chaperonin GroEL from Allochromatium vinosum (Chromatium vinosum).